Here is a 142-residue protein sequence, read N- to C-terminus: MIFKYIVAVSFLIASGYARSVKNDEQSLSQREVLEEESLREIRGIGGALLSVGKSALKGLAKGFAEHFGKRTAEDHEVMKRLEAVIRDLDSLDHSEEASERETRGFNQEEIANLFTKKEKRILGPVLGLVSNAIGGLIKKIG.

A signal peptide spans 1–18; it reads MIFKYIVAVSFLIASGYA. Residues 19–43 constitute a propeptide that is removed on maturation; it reads RSVKNDEQSLSQREVLEEESLREIR. Phenylalanine 68 is subject to Phenylalanine amide. Residues 72 to 121 constitute a propeptide that is removed on maturation; the sequence is TAEDHEVMKRLEAVIRDLDSLDHSEEASERETRGFNQEEIANLFTKKEKR. Isoleucine amide is present on isoleucine 141.

The protein belongs to the bombinin family. Expressed by the skin glands.

The protein localises to the secreted. In terms of biological role, maximin-y shows antimicrobial activity against bacteria and against the fungus C.albicans. It has little hemolytic activity. Maximin-Hw shows antimicrobial activity against bacteria and against the fungus C.albicans. Shows strong hemolytic activity. This is Maximins y/Hw from Bombina maxima (Giant fire-bellied toad).